The chain runs to 168 residues: MRTQSISSHNVQSSSFSANQHAAETSISAGGIISEIVYNADQPIVTHLLLPLLQQLGTQSRWLLWLSPQQKLSRPWVQQSGLPLDKMVQLHHINPLFTVDAMERALLTGNYSAVLCWLPHELTEEEKVRLRHAAQAGNTYGFIMRPESTGGDAYRLFPSLKIHSTLYH.

The ftsZ binding stretch occupies residues 105–111 (ALLTGNY). The interval 161-168 (KIHSTLYH) is lon protease binding.

This sequence belongs to the SulA family. Interacts with FtsZ. In terms of processing, is rapidly cleaved and degraded by the Lon protease once DNA damage is repaired.

Component of the SOS system and an inhibitor of cell division. Accumulation of SulA causes rapid cessation of cell division and the appearance of long, non-septate filaments. In the presence of GTP, binds a polymerization-competent form of FtsZ in a 1:1 ratio, thus inhibiting FtsZ polymerization and therefore preventing it from participating in the assembly of the Z ring. This mechanism prevents the premature segregation of damaged DNA to daughter cells during cell division. The polypeptide is Cell division inhibitor SulA (Pectobacterium carotovorum subsp. carotovorum (strain PC1)).